A 193-amino-acid polypeptide reads, in one-letter code: Probable chorismate pyruvate-lyase (193 aa).

Positions 81, 119, and 177 each coordinate substrate.

The protein belongs to the UbiC family.

Its subcellular location is the cytoplasm. It catalyses the reaction chorismate = 4-hydroxybenzoate + pyruvate. The protein operates within cofactor biosynthesis; ubiquinone biosynthesis. In terms of biological role, removes the pyruvyl group from chorismate, with concomitant aromatization of the ring, to provide 4-hydroxybenzoate (4HB) for the ubiquinone pathway. The protein is Probable chorismate pyruvate-lyase of Idiomarina loihiensis (strain ATCC BAA-735 / DSM 15497 / L2-TR).